A 342-amino-acid polypeptide reads, in one-letter code: MVEARGGLDPRRLFKAYYSLSPPVEEPRDIAYREFAFQLFDGDVYVRHIGFDSMEELLSYMAREAPKNAYYSVARYSLPTARSMEEKGWLGSELMFDIDVDSLEGCGEVLGDSCLSRGYKQAVRLVEALYRDFGVPSTLYFTGNRGFHVLADCGWCRRLGREERREIARYFTLEGLRLELIIPRPGRRGVRPAPPSPDDPGLRGWIARAALERGVDLSAVHEAIEDLLDDVRVAIDVKVTQDISRLARIVGSLNGKAGLLVARLGLEGFHPGDWLSPFRGEVEFRASARLEESRILGRTVSLEPGRVYSMPAHIAVLLQLKGYGAVAGGEVVVRAAAGWRPL.

Residues Asp97, Asp99, and Asp236 contribute to the active site.

Belongs to the eukaryotic-type primase small subunit family. Heterodimer of a small subunit (PriS) and a large subunit (PriL). The cofactor is Mg(2+). Requires Mn(2+) as cofactor.

Functionally, catalytic subunit of DNA primase, an RNA polymerase that catalyzes the synthesis of short RNA molecules used as primers for DNA polymerase during DNA replication. The small subunit contains the primase catalytic core and has DNA synthesis activity on its own. Binding to the large subunit stabilizes and modulates the activity, increasing the rate of DNA synthesis while decreasing the length of the DNA fragments, and conferring RNA synthesis capability. The DNA polymerase activity may enable DNA primase to also catalyze primer extension after primer synthesis. May also play a role in DNA repair. This is DNA primase small subunit PriS from Aeropyrum pernix (strain ATCC 700893 / DSM 11879 / JCM 9820 / NBRC 100138 / K1).